Reading from the N-terminus, the 570-residue chain is Periplasmic trehalase (570 aa).

The first 34 residues, 1 to 34 (MIPPEIRRSVLLQKAIKLALAGTLLTFASFSATA), serve as a signal peptide directing secretion. Substrate-binding positions include R159, 166–167 (WD), N203, 212–214 (RSQ), 284–286 (RPE), and G317. Active-site proton donor/acceptor residues include D319 and E503. E518 contacts substrate. The interval 544–570 (KPCDSVPSTRPASLSATPTKTPSAATQ) is disordered. Low complexity predominate over residues 554 to 570 (PASLSATPTKTPSAATQ).

The protein belongs to the glycosyl hydrolase 37 family. In terms of assembly, monomer.

Its subcellular location is the periplasm. The enzyme catalyses alpha,alpha-trehalose + H2O = alpha-D-glucose + beta-D-glucose. Functionally, provides the cells with the ability to utilize trehalose at high osmolarity by splitting it into glucose molecules that can subsequently be taken up by the phosphotransferase-mediated uptake system. This Salmonella typhimurium (strain LT2 / SGSC1412 / ATCC 700720) protein is Periplasmic trehalase.